The primary structure comprises 75 residues: uncharacterized protein (75 aa).

A disordered region spans residues 1–23 (MADAMDLAQLREQEDRERHISNA). A compositionally biased stretch (basic and acidic residues) spans 9 to 20 (QLREQEDRERHI). Residues 35–59 (CEECDAPIPEARRRAIPGVQCCVTC) form a dksA C4-type zinc finger.

This is an uncharacterized protein from Escherichia phage 186 (Bacteriophage 186).